A 232-amino-acid chain; its full sequence is 7-cyano-7-deazaguanine synthase (232 aa).

Residue 8–18 coordinates ATP; the sequence is FSGGQDSTTCL. Zn(2+) is bound by residues Cys-187, Cys-196, Cys-199, and Cys-202.

It belongs to the QueC family. It depends on Zn(2+) as a cofactor.

The catalysed reaction is 7-carboxy-7-deazaguanine + NH4(+) + ATP = 7-cyano-7-deazaguanine + ADP + phosphate + H2O + H(+). The protein operates within purine metabolism; 7-cyano-7-deazaguanine biosynthesis. In terms of biological role, catalyzes the ATP-dependent conversion of 7-carboxy-7-deazaguanine (CDG) to 7-cyano-7-deazaguanine (preQ(0)). In Shewanella denitrificans (strain OS217 / ATCC BAA-1090 / DSM 15013), this protein is 7-cyano-7-deazaguanine synthase.